Consider the following 219-residue polypeptide: Transmembrane protein 179B (219 aa).

4 helical membrane passes run 9–29 (VELA…AAMT), 65–85 (FVAG…LFWI), 96–116 (GAIG…LVLV), and 167–187 (TSSW…VVQW). The disordered stretch occupies residues 198 to 219 (ERGDPEWSSETDALVGSRLSHS). Residues serine 206 and serine 214 each carry the phosphoserine modification.

Belongs to the TMEM179 family.

The protein localises to the membrane. This chain is Transmembrane protein 179B (TMEM179B), found in Homo sapiens (Human).